We begin with the raw amino-acid sequence, 95 residues long: Putative membrane protein insertion efficiency factor (95 aa).

Residues 72–95 (FDPVPDAPTSPSPSSSCSCKGPHP) form a disordered region. Positions 83-95 (SPSSSCSCKGPHP) are enriched in low complexity.

The protein belongs to the UPF0161 family.

It localises to the cell inner membrane. Functionally, could be involved in insertion of integral membrane proteins into the membrane. The sequence is that of Putative membrane protein insertion efficiency factor from Xanthomonas axonopodis pv. citri (strain 306).